A 137-amino-acid chain; its full sequence is MRAVGVFLATCLVTIFVLPTWGNWAYPCCHVTQLRAQHLLALENISDIYLVSNQTCDGFSLASLNSPKNGSNQLVISRCANGLNVVSFFISILKRSSSALTSHLRELLTTLESLYGSFSVEDLFGANLNRYAWHRGG.

The signal sequence occupies residues 1-25 (MRAVGVFLATCLVTIFVLPTWGNWA). The segment at 23–128 (NWAYPCCHVT…SVEDLFGANL (106 aa)) is interaction with gH. 2 disulfide bridges follow: Cys28/Cys56 and Cys29/Cys79.

The protein belongs to the herpesviridae glycoprotein L family. Interacts with glycoprotein H (gH); this interaction is necessary for the correct processing and cell surface expression of gH. The heterodimer gH/gL seems to interact with gB trimers during fusion. The heterodimer gH/gL interacts with host EPHA2 to facilitate virus internalization and fusion.

It is found in the virion membrane. It localises to the host cell membrane. The protein resides in the host Golgi apparatus. Its subcellular location is the host trans-Golgi network. Functionally, the heterodimer glycoprotein H-glycoprotein L is required for the fusion of viral and plasma membranes leading to virus entry into the host cell. Acts as a functional inhibitor of gH and maintains gH in an inhibited form. Upon binding to host integrins, gL dissociates from gH leading to activation of the viral fusion glycoproteins gB and gH. The heterodimer gH/gL targets also host EPHA2 to promote viral entry. The chain is Envelope glycoprotein L from Homo sapiens (Human).